A 74-amino-acid polypeptide reads, in one-letter code: Protein SspS (74 aa).

This sequence belongs to the alpha/beta-type SASP family.

This Streptococcus pyogenes protein is Protein SspS (sspS).